Reading from the N-terminus, the 78-residue chain is Delta-conotoxin-like CVIE (78 aa).

Positions methionine 1 to alanine 22 are cleaved as a signal peptide. Positions aspartate 23–asparagine 49 are excised as a propeptide. Cystine bridges form between cysteine 54–cysteine 69, cysteine 61–cysteine 73, and cysteine 68–cysteine 77. The residue at position 65 (proline 65) is a 4-hydroxyproline.

The protein belongs to the conotoxin O1 superfamily. As to expression, expressed by the venom duct.

The protein resides in the secreted. Delta-conotoxins bind to site 6 of voltage-gated sodium channels (Nav) and inhibit the inactivation process. The protein is Delta-conotoxin-like CVIE of Conus catus (Cat cone).